The sequence spans 405 residues: CRS2-associated factor 1, mitochondrial (405 aa).

The N-terminal 20 residues, 1–20, are a transit peptide targeting the mitochondrion; the sequence is MFLIRLSRHNPSSFTLLTRR. Positions 32 to 75 are disordered; that stretch reads RDLYNFQSPPPLSSSASENPDFNQKNNNKKKPKPQYRPPSSLEG. CRM domains are found at residues 157-255 and 277-373; these read ASLT…KRPK and DGLS…KEDD. Residues 384 to 405 are disordered; that stretch reads SIDSDVDLSCSRGAQDSPDETT.

As to quaternary structure, part of large ribonucleo-protein complexes that include group IIB introns.

The protein resides in the mitochondrion. Its function is as follows. May be involved in the splicing of group IIB introns in mitochondria. This chain is CRS2-associated factor 1, mitochondrial, found in Arabidopsis thaliana (Mouse-ear cress).